The primary structure comprises 286 residues: ATP synthase gamma chain (286 aa).

It belongs to the ATPase gamma chain family. F-type ATPases have 2 components, CF(1) - the catalytic core - and CF(0) - the membrane proton channel. CF(1) has five subunits: alpha(3), beta(3), gamma(1), delta(1), epsilon(1). CF(0) has three main subunits: a, b and c.

Its subcellular location is the cell inner membrane. Its function is as follows. Produces ATP from ADP in the presence of a proton gradient across the membrane. The gamma chain is believed to be important in regulating ATPase activity and the flow of protons through the CF(0) complex. The sequence is that of ATP synthase gamma chain from Shewanella amazonensis (strain ATCC BAA-1098 / SB2B).